The following is a 460-amino-acid chain: A-type ATP synthase subunit B (460 aa).

It belongs to the ATPase alpha/beta chains family. Has multiple subunits with at least A(3), B(3), C, D, E, F, H, I and proteolipid K(x).

The protein resides in the cell membrane. Functionally, component of the A-type ATP synthase that produces ATP from ADP in the presence of a proton gradient across the membrane. The B chain is a regulatory subunit. This is A-type ATP synthase subunit B from Methanosarcina barkeri (strain Fusaro / DSM 804).